The following is a 341-amino-acid chain: S-adenosylmethionine:tRNA ribosyltransferase-isomerase (341 aa).

This sequence belongs to the QueA family. As to quaternary structure, monomer.

The protein localises to the cytoplasm. It catalyses the reaction 7-aminomethyl-7-carbaguanosine(34) in tRNA + S-adenosyl-L-methionine = epoxyqueuosine(34) in tRNA + adenine + L-methionine + 2 H(+). It participates in tRNA modification; tRNA-queuosine biosynthesis. Transfers and isomerizes the ribose moiety from AdoMet to the 7-aminomethyl group of 7-deazaguanine (preQ1-tRNA) to give epoxyqueuosine (oQ-tRNA). This Chlorobium phaeobacteroides (strain DSM 266 / SMG 266 / 2430) protein is S-adenosylmethionine:tRNA ribosyltransferase-isomerase.